The sequence spans 98 residues: UPF0358 protein LCA_1078 (98 aa).

Belongs to the UPF0358 family.

In Latilactobacillus sakei subsp. sakei (strain 23K) (Lactobacillus sakei subsp. sakei), this protein is UPF0358 protein LCA_1078.